Here is a 358-residue protein sequence, read N- to C-terminus: D-xylulose reductase A (358 aa).

Cys-47, His-72, and Glu-73 together coordinate Zn(2+). 182–187 (GAGPVG) provides a ligand contact to NAD(+).

It belongs to the zinc-containing alcohol dehydrogenase family. Zn(2+) serves as cofactor.

The enzyme catalyses xylitol + NAD(+) = D-xylulose + NADH + H(+). Its pathway is carbohydrate degradation; L-arabinose degradation via L-arabinitol; D-xylulose 5-phosphate from L-arabinose (fungal route): step 4/5. Its function is as follows. Xylitol dehydrogenase which catalyzes the conversion of xylitol to D-xylulose. Xylose is a major component of hemicelluloses such as xylan. Most fungi utilize D-xylose via three enzymatic reactions, xylose reductase (XR), xylitol dehydrogenase (XDH), and xylulokinase, to form xylulose 5-phosphate, which enters pentose phosphate pathway. In Aspergillus oryzae (strain ATCC 42149 / RIB 40) (Yellow koji mold), this protein is D-xylulose reductase A (xdhA).